Reading from the N-terminus, the 201-residue chain is Peroxiredoxin-2F, mitochondrial (201 aa).

Residues 1–30 constitute a mitochondrion transit peptide; the sequence is MAMSILKLRNLSALRSAANSARIGVSSRGF. Thr-37 bears the Phosphothreonine mark. The region spanning 37-201 is the Thioredoxin domain; the sequence is TDITSAAPGV…TGAEVILGQI (165 aa). Cys-89 serves as the catalytic Cysteine sulfenic acid (-SOH) intermediate. A Phosphoserine modification is found at Ser-149.

Belongs to the peroxiredoxin family. Prx5 subfamily. In terms of assembly, monomer. As to expression, expressed in the whole plant.

It localises to the mitochondrion matrix. It carries out the reaction [glutaredoxin]-dithiol + a hydroperoxide = [glutaredoxin]-disulfide + an alcohol + H2O. In terms of biological role, thiol-specific peroxidase that catalyzes the reduction of hydrogen peroxide and organic hydroperoxides to water and alcohols, respectively. Plays a role in cell protection against oxidative stress by detoxifying peroxides. Reduces preferentially hydrogen peroxide rather than alkyl peroxides. May be involved in mitochondrial redox homeostasis. The protein is Peroxiredoxin-2F, mitochondrial (PRXIIF) of Arabidopsis thaliana (Mouse-ear cress).